The following is a 500-amino-acid chain: UBX domain-containing protein 5 (500 aa).

Low complexity predominate over residues 50–61 (SNNTPTPSNSTP). The interval 50 to 70 (SNNTPTPSNSTPMAPTSVDSD) is disordered. Ser139 bears the Phosphoserine mark. Disordered stretches follow at residues 142–169 (NQRLDDTNTNTYINDNSSDSLDSEEEND) and 371–399 (ESLNNNSSKSNQEEVPSTGEEQKRVQEPD). Positions 148–161 (TNTNTYINDNSSDS) are enriched in low complexity. One can recognise a UBX domain in the interval 415 to 493 (KPGITTRIQI…GLKNSSLLLE (79 aa)).

As to quaternary structure, interacts with CDC48.

It is found in the nucleus. Its subcellular location is the cytoplasm. Its function is as follows. Involved in CDC48-dependent protein degradation through the ubiquitin/proteasome pathway. This chain is UBX domain-containing protein 5 (UBX5), found in Saccharomyces cerevisiae (strain ATCC 204508 / S288c) (Baker's yeast).